We begin with the raw amino-acid sequence, 301 residues long: Acetylglutamate kinase (301 aa).

Residues 68 to 69, R90, and N195 each bind substrate; that span reads GG.

The protein belongs to the acetylglutamate kinase family. ArgB subfamily.

The protein localises to the cytoplasm. It catalyses the reaction N-acetyl-L-glutamate + ATP = N-acetyl-L-glutamyl 5-phosphate + ADP. It participates in amino-acid biosynthesis; L-arginine biosynthesis; N(2)-acetyl-L-ornithine from L-glutamate: step 2/4. Functionally, catalyzes the ATP-dependent phosphorylation of N-acetyl-L-glutamate. The sequence is that of Acetylglutamate kinase from Pseudomonas entomophila (strain L48).